Consider the following 152-residue polypeptide: MMKKIDVKILDPRVGKEFPLPTYATSGSAGLDLRACLDDAVELAPGDTTLVPTGLAIHIADPSLAAMMLPRSGLGHKHGIVLGNLVGLIDSDYQGQLMISVWNRGQDSFTIQPGERIAQMIFVPVVQAEFNLVEDFDATDRGEGGFGHSGRQ.

Substrate-binding positions include 71 to 73 (RSG), Asn84, 88 to 90 (LID), and Met98.

Belongs to the dUTPase family. Homotrimer. Requires Mg(2+) as cofactor.

The catalysed reaction is dUTP + H2O = dUMP + diphosphate + H(+). It participates in pyrimidine metabolism; dUMP biosynthesis; dUMP from dCTP (dUTP route): step 2/2. In terms of biological role, this enzyme is involved in nucleotide metabolism: it produces dUMP, the immediate precursor of thymidine nucleotides and it decreases the intracellular concentration of dUTP so that uracil cannot be incorporated into DNA. The chain is Deoxyuridine 5'-triphosphate nucleotidohydrolase from Escherichia coli O157:H7.